A 542-amino-acid polypeptide reads, in one-letter code: Malolactic enzyme (542 aa).

The active-site Proton donor is Tyr-92. Residue Lys-165 is the Proton acceptor of the active site. Lys-165 is a substrate binding site. Mn(2+)-binding residues include Glu-236, Asp-237, and Asp-260. Residues 293-296 (AGTA), Asn-405, and Asn-450 each bind NAD(+). Asn-450 contributes to the substrate binding site.

Belongs to the malic enzymes family. As to quaternary structure, homodimer. Mn(2+) is required as a cofactor. NAD(+) serves as cofactor.

The enzyme catalyses (S)-malate + H(+) = (S)-lactate + CO2. With respect to regulation, oxamate, fructose-1,6-diphosphate and L-lactate act as non-competitive inhibitors, whereas succinate, citrate and tartrate isomers produce a competitive inhibition. Functionally, involved in the malolactic fermentation (MLF) of wine, which results in a natural decrease in acidity and favorable changes in wine flavors. Catalyzes the decarboxylation of L-malate to L-lactate. This is Malolactic enzyme (mleS) from Leuconostoc mesenteroides.